An 85-amino-acid chain; its full sequence is U4-theraphotoxin-Hhn1u (85 aa).

The N-terminal stretch at 1-22 (MKMTLIAILTCAAVLVLHTTAA) is a signal peptide. Positions 23–48 (EELEAESQLMEVGMPDTELEAVDEER) are excised as a propeptide. 3 disulfide bridges follow: Cys52–Cys66, Cys56–Cys77, and Cys71–Cys82.

This sequence belongs to the neurotoxin 12 (Hwtx-2) family. 02 (Hwtx-2) subfamily. Expressed by the venom gland.

It localises to the secreted. In terms of biological role, postsynaptic neurotoxin. The sequence is that of U4-theraphotoxin-Hhn1u from Cyriopagopus hainanus (Chinese bird spider).